Here is a 611-residue protein sequence, read N- to C-terminus: Leukotriene A-4 hydrolase (611 aa).

N6-acetyllysine is present on lysine 73. A peptide contacts are provided by residues 135-137 and 267-272; these read QCQ and PYGGME. Histidine 296 is a Zn(2+) binding site. Glutamate 297 acts as the Proton acceptor in catalysis. Residues histidine 300 and glutamate 319 each contribute to the Zn(2+) site. At lysine 337 the chain carries N6-acetyllysine. Catalysis depends on tyrosine 384, which acts as the Proton donor. At lysine 414 the chain carries N6-acetyllysine. Serine 416 is modified (phosphoserine). Residue 564 to 566 participates in a peptide binding; sequence RMK. The residue at position 573 (lysine 573) is an N6-acetyllysine.

Belongs to the peptidase M1 family. As to quaternary structure, monomer. Requires Zn(2+) as cofactor. Phosphorylation at Ser-416 inhibits leukotriene-A4 hydrolase activity.

It localises to the cytoplasm. It carries out the reaction leukotriene A4 + H2O = leukotriene B4. It catalyses the reaction (5S,6S)-epoxy-(18R)-hydroxy-(7E,9E,11Z,14Z,16E)-eicosapentaenoate + H2O = resolvin E1. The enzyme catalyses (5S,6S)-epoxy-(18S)-hydroxy-(7E,9E,11Z,14Z,16E)-eicosapentaenoate + H2O = 18S-resolvin E1. The catalysed reaction is Release of the N-terminal residue from a tripeptide.. The protein operates within lipid metabolism; leukotriene B4 biosynthesis. Inhibited by bestatin. The epoxide hydrolase activity is restrained by suicide inactivation that involves binding of LTA4 to Tyr-379. 4-(4-benzylphenyl)thiazol-2-amine (ARM1) selectively inhibits the epoxide hydrolase activity. Functionally, bifunctional zinc metalloenzyme that comprises both epoxide hydrolase (EH) and aminopeptidase activities. Acts as an epoxide hydrolase to catalyze the conversion of LTA4 to the pro-inflammatory mediator leukotriene B4 (LTB4). Also has aminopeptidase activity, with high affinity for N-terminal arginines of various synthetic tripeptides. In addition to its pro-inflammatory EH activity, may also counteract inflammation by its aminopeptidase activity, which inactivates by cleavage another neutrophil attractant, the tripeptide Pro-Gly-Pro (PGP), a bioactive fragment of collagen generated by the action of matrix metalloproteinase-9 (MMP9) and prolylendopeptidase (PREPL). Involved also in the biosynthesis of resolvin E1 and 18S-resolvin E1 from eicosapentaenoic acid, two lipid mediators that show potent anti-inflammatory and pro-resolving actions. In Mus musculus (Mouse), this protein is Leukotriene A-4 hydrolase (Lta4h).